A 1220-amino-acid polypeptide reads, in one-letter code: Pesticidal crystal protein Cry5Ac (1220 aa).

The tract at residues 1194-1220 (PLPTDDQNSEGNTAFSTNSDTSMNNNQ) is disordered. A compositionally biased stretch (polar residues) spans 1198–1220 (DDQNSEGNTAFSTNSDTSMNNNQ).

It belongs to the delta endotoxin family.

Promotes colloidosmotic lysis by binding to the midgut epithelial cells of hymenopteran species. This Bacillus thuringiensis protein is Pesticidal crystal protein Cry5Ac (cry5Ac).